The primary structure comprises 298 residues: Diphthine methyl ester synthase (298 aa).

Residues Leu-9, Asp-85, Gly-88, 113–114 (SV), Leu-164, Leu-222, and His-247 each bind S-adenosyl-L-methionine.

Belongs to the diphthine synthase family.

The protein localises to the cytoplasm. It catalyses the reaction 2-[(3S)-amino-3-carboxypropyl]-L-histidyl-[translation elongation factor 2] + 4 S-adenosyl-L-methionine = diphthine methyl ester-[translation elongation factor 2] + 4 S-adenosyl-L-homocysteine + 3 H(+). It functions in the pathway protein modification; peptidyl-diphthamide biosynthesis. S-adenosyl-L-methionine-dependent methyltransferase that catalyzes four methylations of the modified target histidine residue in translation elongation factor 2 (EF-2), to form an intermediate called diphthine methyl ester. The four successive methylation reactions represent the second step of diphthamide biosynthesis. This Candida glabrata (strain ATCC 2001 / BCRC 20586 / JCM 3761 / NBRC 0622 / NRRL Y-65 / CBS 138) (Yeast) protein is Diphthine methyl ester synthase (DPH5).